The sequence spans 162 residues: Crossover junction endodeoxyribonuclease RuvC (162 aa).

Active-site residues include Asp-8, Glu-69, and His-141. Mg(2+) contacts are provided by Asp-8, Glu-69, and His-141.

Belongs to the RuvC family. Homodimer which binds Holliday junction (HJ) DNA. The HJ becomes 2-fold symmetrical on binding to RuvC with unstacked arms; it has a different conformation from HJ DNA in complex with RuvA. In the full resolvosome a probable DNA-RuvA(4)-RuvB(12)-RuvC(2) complex forms which resolves the HJ. Mg(2+) is required as a cofactor.

The protein localises to the cytoplasm. The enzyme catalyses Endonucleolytic cleavage at a junction such as a reciprocal single-stranded crossover between two homologous DNA duplexes (Holliday junction).. The RuvA-RuvB-RuvC complex processes Holliday junction (HJ) DNA during genetic recombination and DNA repair. Endonuclease that resolves HJ intermediates. Cleaves cruciform DNA by making single-stranded nicks across the HJ at symmetrical positions within the homologous arms, yielding a 5'-phosphate and a 3'-hydroxyl group; requires a central core of homology in the junction. The consensus cleavage sequence is 5'-(A/T)TT(C/G)-3'. Cleavage occurs on the 3'-side of the TT dinucleotide at the point of strand exchange. HJ branch migration catalyzed by RuvA-RuvB allows RuvC to scan DNA until it finds its consensus sequence, where it cleaves and resolves the cruciform DNA. The chain is Crossover junction endodeoxyribonuclease RuvC from Wolbachia sp. subsp. Brugia malayi (strain TRS).